The chain runs to 172 residues: Large ribosomal subunit protein uL10 (172 aa).

The protein belongs to the universal ribosomal protein uL10 family. As to quaternary structure, part of the ribosomal stalk of the 50S ribosomal subunit. The N-terminus interacts with L11 and the large rRNA to form the base of the stalk. The C-terminus forms an elongated spine to which L12 dimers bind in a sequential fashion forming a multimeric L10(L12)X complex.

Forms part of the ribosomal stalk, playing a central role in the interaction of the ribosome with GTP-bound translation factors. In Methylorubrum populi (strain ATCC BAA-705 / NCIMB 13946 / BJ001) (Methylobacterium populi), this protein is Large ribosomal subunit protein uL10.